Reading from the N-terminus, the 251-residue chain is WUSCHEL-related homeobox 4 (251 aa).

Disordered regions lie at residues 1-21 (MKVH…DSTS) and 33-93 (LAPK…RWNP). Residues 11-21 (SSSWDQHDSTS) are compositionally biased toward low complexity. Over residues 71–83 (KFEHKRDPPHQLE) the composition is skewed to basic and acidic residues. A DNA-binding region (homeobox; WUS-type) is located at residues 86-150 (PGGTRWNPTQ…NHKARERQKQ (65 aa)).

It belongs to the WUS homeobox family. As to expression, expressed in the vasculature of the whole plant (roots, hypocotyls, cotyledons and leaves), trichomes and stomata. Expresse in the developing vascular bundles of root and shoot lateral organs.

It is found in the nucleus. In terms of biological role, promotes differentiation and/or maintenance of the vascular procambium, the initial cells of the developing vasculature. Part of the TDIF-TDR-WOX4 signaling pathway that plays a crucial role in the maintenance of the vascular meristem organization during secondary growth. Is required for promoting the proliferation of procambial/cambial stem cells but not for repressing their commitment to xylem differentiation in response to the TDIF signal. Acts redundantly with WOX14 downstream of the TDR/PXY receptor kinase to regulate procambial cell proliferation and differentiation in vascular tissue, independently of any role in vascular. Acts as a cambium regulator in the inflorescence stem. Is required for auxin-dependent cambium stimulation in the inflorescence stem. This chain is WUSCHEL-related homeobox 4 (WOX4), found in Arabidopsis thaliana (Mouse-ear cress).